The chain runs to 448 residues: MGSCLSSSGGGGSRRSLHGSPHVPGPGRRKRPPKRRPGSCSSSFDNTEEPLLHRIPGRMFLNGSTDTVSLFSQQGKKGPNQDAMIVWENFGSMEDTVFCGVFDGHGPYGHIVAKRVRDLLPLKLGSHLESYVSPEEVLKEISLNTDDRKISEDLVHISANGESRVYNKDYVKDQDMIQMLIGSIVKAYRFMDKELKMQVDVDCFCSGTTAVTMVKQGQHLVIGNIGDSRAVLGVRNKDNKLVPFQLTEDLKPDVPAEAERIKRCRGRIFALRDEPGVARLWLPNHNSPGLAMARAFGDFCLKDFGLISVPDVSYRRLTEKDEFVVLATDGIWDALTNEEVVKIVAKAPTRSSAGRALVEAAVRNWRWKFPTSKVDDCAVVCLFLDSEPNRLSTASFSKEKHINNGVTEPEPDTASSSTPDSGTGSPELNGVNRIDTLVNLPVYVPTKE.

The tract at residues 1-48 is disordered; it reads MGSCLSSSGGGGSRRSLHGSPHVPGPGRRKRPPKRRPGSCSSSFDNTE. Residue glycine 2 is the site of N-myristoyl glycine attachment. A compositionally biased stretch (basic residues) spans 27-37; it reads GRRKRPPKRRP. The 318-residue stretch at 67 to 384 folds into the PPM-type phosphatase domain; it reads TVSLFSQQGK…DDCAVVCLFL (318 aa). Positions 103, 104, 329, and 375 each coordinate Mn(2+). Residues 401 to 431 form a disordered region; that stretch reads HINNGVTEPEPDTASSSTPDSGTGSPELNGV. Residues 412-426 show a composition bias toward low complexity; the sequence is DTASSSTPDSGTGSP.

It belongs to the PP2C family. In terms of assembly, interacts with KIN10. Requires Mg(2+) as cofactor. The cofactor is Mn(2+). As to expression, expressed in the whole plant.

It is found in the cell membrane. It catalyses the reaction O-phospho-L-seryl-[protein] + H2O = L-seryl-[protein] + phosphate. The enzyme catalyses O-phospho-L-threonyl-[protein] + H2O = L-threonyl-[protein] + phosphate. In terms of biological role, acts as a protein phosphatase. The sequence is that of Probable protein phosphatase 2C 74 from Arabidopsis thaliana (Mouse-ear cress).